A 352-amino-acid chain; its full sequence is Mitochondrial adenine nucleotide transporter ADNT1 (352 aa).

3 Solcar repeats span residues 36–123 (KSIC…ASNG), 139–227 (LTPL…LKDW), and 242–343 (LTVV…VKDV). 6 helical membrane passes run 41-61 (SLFA…PLER), 100-120 (GTNC…YEQA), 145-162 (LGAG…TYPM), 202-221 (GWLP…FSVY), 242-263 (LTVV…TIAY), and 324-340 (VKVV…YEMV).

Belongs to the mitochondrial carrier (TC 2.A.29) family. In terms of tissue distribution, expressed in seedling radicles and roots, vasculature of cotyledons, leaf primordia, leaves and sepals.

It localises to the mitochondrion inner membrane. Inhibited by pyridoxal 5-phosphate, bathophenanthroline, mersalyl, p-hydroxymercuribenzoate and tannic acid. In terms of biological role, mitochondrial adenylate carrier that catalyzes specifically the transport of ATP, ADP and AMP by a counter-exchange mechanism across the inner mitochondrial membrane. Substrate preference in reconstituted proteoliposomes is ATP &gt; AMP &gt; ADP. May play a role in oxidative phosphorylation and be important for the provision of energy required to support growth in heterotrophic tissues. This Arabidopsis thaliana (Mouse-ear cress) protein is Mitochondrial adenine nucleotide transporter ADNT1 (ADNT1).